Reading from the N-terminus, the 326-residue chain is MKPSIVLYKSIPTDLHQRLAQHFTVNSFDGLTPDNQPELLAALQQAEGLIGSGGKIDQDFLQLAPNLRAASTISVGYDNFDVEALSQRGIALMHTPTVLTETVADTMMALMLSTARRVVELAERVKAGEWQESIGDDWFGVDVHHKTIGILGMGRIGMALAQRAHFGFSMPVLYTSRRPHEAAEQRFGARHCSLDTLLAEADFLCITLPMTEQTYHMIGREQLAKIKSSAILINAGRGPVVDEQALIAALQDGTIHAAGLDVFEQEPLPVDSPLLTLRNVVAVPHIGSATHETRYNMAACAVDNLINALTGTVKENCVNPQVLITH.

Catalysis depends on residues Arg-237 and Glu-266. His-285 (proton donor) is an active-site residue.

This sequence belongs to the D-isomer specific 2-hydroxyacid dehydrogenase family. GhrB subfamily. In terms of assembly, homodimer.

It localises to the cytoplasm. The catalysed reaction is glycolate + NADP(+) = glyoxylate + NADPH + H(+). It carries out the reaction (R)-glycerate + NAD(+) = 3-hydroxypyruvate + NADH + H(+). It catalyses the reaction (R)-glycerate + NADP(+) = 3-hydroxypyruvate + NADPH + H(+). In terms of biological role, catalyzes the NADPH-dependent reduction of glyoxylate and hydroxypyruvate into glycolate and glycerate, respectively. The sequence is that of Glyoxylate/hydroxypyruvate reductase B from Yersinia pseudotuberculosis serotype O:3 (strain YPIII).